Consider the following 120-residue polypeptide: Large ribosomal subunit protein uL18 (120 aa).

The protein belongs to the universal ribosomal protein uL18 family. As to quaternary structure, part of the 50S ribosomal subunit; part of the 5S rRNA/L5/L18/L25 subcomplex. Contacts the 5S and 23S rRNAs.

This is one of the proteins that bind and probably mediate the attachment of the 5S RNA into the large ribosomal subunit, where it forms part of the central protuberance. The sequence is that of Large ribosomal subunit protein uL18 from Rhodospirillum centenum (strain ATCC 51521 / SW).